The chain runs to 390 residues: 3-ketoacyl-CoA thiolase (390 aa).

Cysteine 95 serves as the catalytic Acyl-thioester intermediate. Catalysis depends on proton acceptor residues histidine 346 and cysteine 376.

The protein belongs to the thiolase-like superfamily. Thiolase family. In terms of assembly, heterotetramer of two alpha chains (FadB) and two beta chains (FadA).

It is found in the cytoplasm. It carries out the reaction an acyl-CoA + acetyl-CoA = a 3-oxoacyl-CoA + CoA. It participates in lipid metabolism; fatty acid beta-oxidation. Catalyzes the final step of fatty acid oxidation in which acetyl-CoA is released and the CoA ester of a fatty acid two carbons shorter is formed. This Acinetobacter baumannii (strain ATCC 17978 / DSM 105126 / CIP 53.77 / LMG 1025 / NCDC KC755 / 5377) protein is 3-ketoacyl-CoA thiolase.